A 491-amino-acid chain; its full sequence is Argininosuccinate lyase (491 aa).

This sequence belongs to the lyase 1 family. Argininosuccinate lyase subfamily.

The protein localises to the cytoplasm. The catalysed reaction is 2-(N(omega)-L-arginino)succinate = fumarate + L-arginine. The protein operates within amino-acid biosynthesis; L-arginine biosynthesis; L-arginine from L-ornithine and carbamoyl phosphate: step 3/3. The sequence is that of Argininosuccinate lyase from Methanosarcina acetivorans (strain ATCC 35395 / DSM 2834 / JCM 12185 / C2A).